A 520-amino-acid chain; its full sequence is Peptidoglycan-recognition protein LC (520 aa).

Composition is skewed to polar residues over residues 1 to 14 (MPFSNETEMSQCSN) and 27 to 36 (KNCSTSSTDS). 2 disordered regions span residues 1-78 (MPFS…RISV) and 239-278 (DKWKPGEGPAGGQDNPAFNGGPSTNGSAPGSKHEDPAQTP). Residues 1–291 (MPFSNETEMS…PFLPNTVGRK (291 aa)) lie on the Cytoplasmic side of the membrane. Composition is skewed to basic and acidic residues over residues 48-58 (RPEKETKDRGT) and 66-78 (KSEEKTESKRISV). Residues 292-312 (AVTVTVVFVTLTFLLGIVLAT) form a helical; Signal-anchor for type II membrane protein membrane-spanning segment. At 313-520 (TTNLFGKTLN…ASFANWTHWS (208 aa)) the chain is on the extracellular side. N-linked (GlcNAc...) asparagine glycosylation is present at Asn-389. Cys-390 and Cys-396 are oxidised to a cystine. An N-acetylmuramoyl-L-alanine amidase domain is found at 412 to 490 (QKCDIAYNFL…KLGKIAPSYR (79 aa)). Asn-515 carries an N-linked (GlcNAc...) asparagine glycan.

This sequence belongs to the N-acetylmuramoyl-L-alanine amidase 2 family. Post-translationally, proteolytically cleaved, probably by a metaloprotease such as Mmp2; proteolytic cleavage leads to activation of the imd/Relish signaling pathway. Expressed in the fat body and hemocytes.

Its subcellular location is the membrane. Its activity is regulated as follows. Activated by proteolytic cleavage in response to Gram-negative bacterial infection; cleavage may be mediated by endogenous proteases, such as the metalloprotease Mmp2 or elastase, or by bacterially expressed proteases such as the surface serine protease OmpT. In terms of biological role, major activator of the imd/Relish pathway and is likely to encode a pattern recognition molecule for the humoral immune response. Required for Relish processing and nuclear translocation following proteolytic cleavage. Involved in the response to lipopolysaccharide (LPS) and peptidoglycan of Gram-negative bacteria. The different isoforms probably display different recognition capabilities to various microbial patterns. Its function is as follows. Mediates the response to LPS and Gram-negative bacteria. Mediates the response to LPS, peptidoglycan and Gram-negative bacteria. This chain is Peptidoglycan-recognition protein LC (PGRP-LC), found in Drosophila melanogaster (Fruit fly).